The following is a 368-amino-acid chain: Peptide chain release factor 2 (368 aa).

The tract at residues 36 to 56 (EAQAGDPSLWDDPDHAQKVTS) is disordered. Residue Q250 is modified to N5-methylglutamine.

Belongs to the prokaryotic/mitochondrial release factor family. In terms of processing, methylated by PrmC. Methylation increases the termination efficiency of RF2.

It is found in the cytoplasm. In terms of biological role, peptide chain release factor 2 directs the termination of translation in response to the peptide chain termination codons UGA and UAA. This Corynebacterium aurimucosum (strain ATCC 700975 / DSM 44827 / CIP 107346 / CN-1) (Corynebacterium nigricans) protein is Peptide chain release factor 2.